Reading from the N-terminus, the 70-residue chain is Conotoxin Mr3.8 (70 aa).

Residues 1 to 24 (MLKMGVVLFIFLVLFPLATLQLDA) form the signal peptide. Residues 25-54 (DQPVERYAKNKQLFNPHKRRGIILRAPGKR) constitute a propeptide that is removed on maturation. Cystine bridges form between Cys55–Cys67, Cys56–Cys68, and Cys61–Cys65.

Belongs to the conotoxin M superfamily. In terms of tissue distribution, expressed by the venom duct.

The protein localises to the secreted. In vitro, inhibits proliferation of the mice ovarian cancer cells ID8. This chain is Conotoxin Mr3.8, found in Conus marmoreus (Marble cone).